The chain runs to 311 residues: Acetyl-coenzyme A carboxylase carboxyl transferase subunit alpha (311 aa).

The CoA carboxyltransferase C-terminal domain occupies 36–286 (KLEKEVEKTF…KEYFIKSLAE (251 aa)).

Belongs to the AccA family. Acetyl-CoA carboxylase is a heterohexamer composed of biotin carboxyl carrier protein (AccB), biotin carboxylase (AccC) and two subunits each of ACCase subunit alpha (AccA) and ACCase subunit beta (AccD).

It localises to the cytoplasm. It catalyses the reaction N(6)-carboxybiotinyl-L-lysyl-[protein] + acetyl-CoA = N(6)-biotinyl-L-lysyl-[protein] + malonyl-CoA. It functions in the pathway lipid metabolism; malonyl-CoA biosynthesis; malonyl-CoA from acetyl-CoA: step 1/1. Functionally, component of the acetyl coenzyme A carboxylase (ACC) complex. First, biotin carboxylase catalyzes the carboxylation of biotin on its carrier protein (BCCP) and then the CO(2) group is transferred by the carboxyltransferase to acetyl-CoA to form malonyl-CoA. In Aliarcobacter butzleri (strain RM4018) (Arcobacter butzleri), this protein is Acetyl-coenzyme A carboxylase carboxyl transferase subunit alpha.